The chain runs to 175 residues: Glutamyl-tRNA(Gln) amidotransferase subunit F, mitochondrial (175 aa).

Residues 1-19 constitute a mitochondrion transit peptide; the sequence is MLKVSARHAPVLRLPRRFY.

Belongs to the GatF family. As to quaternary structure, subunit of the heterotrimeric GatFAB amidotransferase (AdT) complex, composed of A, B and F subunits.

The protein localises to the mitochondrion inner membrane. The enzyme catalyses L-glutamyl-tRNA(Gln) + L-glutamine + ATP + H2O = L-glutaminyl-tRNA(Gln) + L-glutamate + ADP + phosphate + H(+). Its function is as follows. Allows the formation of correctly charged Gln-tRNA(Gln) through the transamidation of misacylated Glu-tRNA(Gln) in the mitochondria. The reaction takes place in the presence of glutamine and ATP through an activated gamma-phospho-Glu-tRNA(Gln). Required for proper protein synthesis within the mitochondrion. The polypeptide is Glutamyl-tRNA(Gln) amidotransferase subunit F, mitochondrial (Lachancea thermotolerans (strain ATCC 56472 / CBS 6340 / NRRL Y-8284) (Yeast)).